Consider the following 549-residue polypeptide: Cytoplasmic trehalase (549 aa).

Residues arginine 168, 175–176 (WD), asparagine 212, 221–223 (RSQ), 292–294 (RDE), and glycine 324 each bind substrate. Catalysis depends on proton donor/acceptor residues aspartate 326 and glutamate 509. Glutamate 525 is a substrate binding site.

Belongs to the glycosyl hydrolase 37 family. In terms of assembly, monomer.

The protein resides in the cytoplasm. The catalysed reaction is alpha,alpha-trehalose + H2O = alpha-D-glucose + beta-D-glucose. The protein operates within glycan degradation; trehalose degradation; D-glucose from alpha,alpha-trehalose: step 1/1. Functionally, hydrolyzes trehalose to glucose. Could be involved, in cells returning to low osmolarity conditions, in the utilization of the accumulated cytoplasmic trehalose, which was synthesized in response to high osmolarity. The chain is Cytoplasmic trehalase from Salmonella typhi.